Reading from the N-terminus, the 678-residue chain is Glycine--tRNA ligase beta subunit (678 aa).

Belongs to the class-II aminoacyl-tRNA synthetase family. In terms of assembly, tetramer of two alpha and two beta subunits.

Its subcellular location is the cytoplasm. The enzyme catalyses tRNA(Gly) + glycine + ATP = glycyl-tRNA(Gly) + AMP + diphosphate. The sequence is that of Glycine--tRNA ligase beta subunit from Streptococcus suis (strain 98HAH33).